The primary structure comprises 490 residues: Aspartyl/glutamyl-tRNA(Asn/Gln) amidotransferase subunit B (490 aa).

It belongs to the GatB/GatE family. GatB subfamily. As to quaternary structure, heterotrimer of A, B and C subunits.

It catalyses the reaction L-glutamyl-tRNA(Gln) + L-glutamine + ATP + H2O = L-glutaminyl-tRNA(Gln) + L-glutamate + ADP + phosphate + H(+). The enzyme catalyses L-aspartyl-tRNA(Asn) + L-glutamine + ATP + H2O = L-asparaginyl-tRNA(Asn) + L-glutamate + ADP + phosphate + 2 H(+). In terms of biological role, allows the formation of correctly charged Asn-tRNA(Asn) or Gln-tRNA(Gln) through the transamidation of misacylated Asp-tRNA(Asn) or Glu-tRNA(Gln) in organisms which lack either or both of asparaginyl-tRNA or glutaminyl-tRNA synthetases. The reaction takes place in the presence of glutamine and ATP through an activated phospho-Asp-tRNA(Asn) or phospho-Glu-tRNA(Gln). The polypeptide is Aspartyl/glutamyl-tRNA(Asn/Gln) amidotransferase subunit B (Symbiobacterium thermophilum (strain DSM 24528 / JCM 14929 / IAM 14863 / T)).